The chain runs to 324 residues: Acetyl-coenzyme A carboxylase carboxyl transferase subunit alpha (324 aa).

The CoA carboxyltransferase C-terminal domain occupies 37-291 (ILEEKLENLE…DLMIQKTFQQ (255 aa)).

This sequence belongs to the AccA family. As to quaternary structure, acetyl-CoA carboxylase is a heterohexamer composed of biotin carboxyl carrier protein (AccB), biotin carboxylase (AccC) and two subunits each of ACCase subunit alpha (AccA) and ACCase subunit beta (AccD).

It localises to the cytoplasm. It carries out the reaction N(6)-carboxybiotinyl-L-lysyl-[protein] + acetyl-CoA = N(6)-biotinyl-L-lysyl-[protein] + malonyl-CoA. It participates in lipid metabolism; malonyl-CoA biosynthesis; malonyl-CoA from acetyl-CoA: step 1/1. Functionally, component of the acetyl coenzyme A carboxylase (ACC) complex. First, biotin carboxylase catalyzes the carboxylation of biotin on its carrier protein (BCCP) and then the CO(2) group is transferred by the carboxyltransferase to acetyl-CoA to form malonyl-CoA. This is Acetyl-coenzyme A carboxylase carboxyl transferase subunit alpha from Bacillus cereus (strain ATCC 14579 / DSM 31 / CCUG 7414 / JCM 2152 / NBRC 15305 / NCIMB 9373 / NCTC 2599 / NRRL B-3711).